Consider the following 738-residue polypeptide: Elongation factor G, mitochondrial (738 aa).

The segment at 1-20 is disordered; sequence MCIGPAPTPETEEELPPSPQ. The region spanning 32 to 320 is the tr-type G domain; sequence RFQRNIGVSA…GVCAYLPNPA (289 aa). GTP is bound by residues 41-48, 118-122, and 172-175; these read AHIDSGKT, DTPGH, and NKMD.

It belongs to the TRAFAC class translation factor GTPase superfamily. Classic translation factor GTPase family. EF-G/EF-2 subfamily.

Its subcellular location is the mitochondrion. It participates in protein biosynthesis; polypeptide chain elongation. In terms of biological role, mitochondrial GTPase that catalyzes the GTP-dependent ribosomal translocation step during translation elongation. During this step, the ribosome changes from the pre-translocational (PRE) to the post-translocational (POST) state as the newly formed A-site-bound peptidyl-tRNA and P-site-bound deacylated tRNA move to the P and E sites, respectively. Catalyzes the coordinated movement of the two tRNA molecules, the mRNA and conformational changes in the ribosome. The sequence is that of Elongation factor G, mitochondrial from Laccaria bicolor (strain S238N-H82 / ATCC MYA-4686) (Bicoloured deceiver).